Reading from the N-terminus, the 325-residue chain is Replication factor C small subunit (325 aa).

Residue 47-54 (GPPGTGKT) participates in ATP binding.

This sequence belongs to the activator 1 small subunits family. RfcS subfamily. Heteromultimer composed of small subunits (RfcS) and large subunits (RfcL).

In terms of biological role, part of the RFC clamp loader complex which loads the PCNA sliding clamp onto DNA. This chain is Replication factor C small subunit, found in Aeropyrum pernix (strain ATCC 700893 / DSM 11879 / JCM 9820 / NBRC 100138 / K1).